Here is a 157-residue protein sequence, read N- to C-terminus: Trafficking protein particle complex subunit 6b (157 aa).

The protein belongs to the TRAPP small subunits family. BET3 subfamily. In terms of assembly, homodimer. Part of a TRAPP complex.

The protein resides in the golgi apparatus. The protein localises to the cis-Golgi network. Its subcellular location is the endoplasmic reticulum. In terms of biological role, component of a transport protein particle (TRAPP) complex that may function in specific stages of inter-organelle traffic. Specifically involved in the early development of neural circuitry, likely by controlling the frequency and amplitude of intracellular calcium transients implicated in the regulation of neuron differentiation and survival. This is Trafficking protein particle complex subunit 6b from Danio rerio (Zebrafish).